Consider the following 609-residue polypeptide: MTIKFLSENTINRIAAGEVIERPASVVKELVENAVDAGSTKIDIILERAGKNLIIISDDGIGMTDKELEIAVERHTTSKLDESDFLNIHTFGFRGEALPSIAAISKMLITSKKQGYDKAFQIKLIGGNEKQVTISVHNEGTKIEIRDLFFATPARLKFLRSDKTELVATVDVVKKIALAHPKISFSLTHDDRNLLKFKGHNKDVETNLKQRIIDVIGDDFIKNAAYIDFKTPDFSICGYTSIPTYNRASSEDQFLFINNRPVKDKLLQVALRVAYQDYLARDRYPLCAIFLQIDPQLVDVNVHPAKAEVRFHDPNYVRNLLIEAIKNALTNTSHVTSTTIASDALQLFKNHLVNKQPSVSKAVSVNSKPTDYRPAMSPSFKSTPNTDCQKLIDTLPHAKIEQEVERRIEREQQAHKQYKLGAAKAQLHTTYIISQTEDSIVITDQHAAHERLGYEKIKDYLKTEELIRQRLLIPEIVELPNERNADSLYENREKLYKLGLTLEKFGEKSIIVTEIPNILGDVNVQKLIHDLADHLSDFGENIALTELIEHVTETYACHYSIRAGRKLSADEMNALLRQMENTPFSGQCNHGRPTYIELKLKDIERLFGR.

Positions 364-386 (SVNSKPTDYRPAMSPSFKSTPNT) are disordered.

The protein belongs to the DNA mismatch repair MutL/HexB family.

In terms of biological role, this protein is involved in the repair of mismatches in DNA. It is required for dam-dependent methyl-directed DNA mismatch repair. May act as a 'molecular matchmaker', a protein that promotes the formation of a stable complex between two or more DNA-binding proteins in an ATP-dependent manner without itself being part of a final effector complex. This is DNA mismatch repair protein MutL from Rickettsia akari (strain Hartford).